A 297-amino-acid chain; its full sequence is L-threonate dehydrogenase (297 aa).

NAD(+) contacts are provided by residues 3–31 (RNIG…VHAC) and T97. Residue K173 is part of the active site. K241 contributes to the NAD(+) binding site.

The protein belongs to the HIBADH-related family. L-threonate dehydrogenase subfamily.

It carries out the reaction L-threonate + NAD(+) = 2-dehydro-L-erythronate + NADH + H(+). Catalyzes oxidation of L-threonate to 2-oxo-tetronate. Can use either NAD(+) or NADP(+) as cosubstrate, with a preference for NAD(+). This Cupriavidus necator (strain ATCC 17699 / DSM 428 / KCTC 22496 / NCIMB 10442 / H16 / Stanier 337) (Ralstonia eutropha) protein is L-threonate dehydrogenase.